Consider the following 910-residue polypeptide: Protein translocase subunit SecA (910 aa).

ATP-binding positions include glutamine 89, glycine 107 to threonine 111, and aspartate 502. Positions 889, 891, 900, and 901 each coordinate Zn(2+).

This sequence belongs to the SecA family. In terms of assembly, monomer and homodimer. Part of the essential Sec protein translocation apparatus which comprises SecA, SecYEG and auxiliary proteins SecDF-YajC and YidC. The cofactor is Zn(2+).

Its subcellular location is the cell inner membrane. It is found in the cytoplasm. It catalyses the reaction ATP + H2O + cellular proteinSide 1 = ADP + phosphate + cellular proteinSide 2.. In terms of biological role, part of the Sec protein translocase complex. Interacts with the SecYEG preprotein conducting channel. Has a central role in coupling the hydrolysis of ATP to the transfer of proteins into and across the cell membrane, serving both as a receptor for the preprotein-SecB complex and as an ATP-driven molecular motor driving the stepwise translocation of polypeptide chains across the membrane. The polypeptide is Protein translocase subunit SecA (Bartonella bacilliformis (strain ATCC 35685 / KC583 / Herrer 020/F12,63)).